Here is a 162-residue protein sequence, read N- to C-terminus: MKKKIIILFLFTAILCSITLCGCISFEKTQIGNYNIKNNSCINSNVSKNQTIQNVSDKIVNNNTNILNTLNYEIIAYGAFGEKNRGYYYYYKDNKTIIVINLEEMPTAGYKIKIINITETANKITVYYKVIPPKEFAAMVVTYPYIKLSVNGTYNVECKEVR.

Residues 5-25 (IIILFLFTAILCSITLCGCIS) form a helical membrane-spanning segment.

It is found in the membrane. This is an uncharacterized protein from Methanocaldococcus jannaschii (strain ATCC 43067 / DSM 2661 / JAL-1 / JCM 10045 / NBRC 100440) (Methanococcus jannaschii).